The following is a 634-amino-acid chain: Probable potassium transport system protein Kup (634 aa).

Helical transmembrane passes span 21 to 41, 58 to 78, 110 to 130, 147 to 167, 179 to 199, 223 to 243, 258 to 278, 296 to 316, 348 to 368, 377 to 397, 403 to 423, and 427 to 447; these read LVIG…LYTL, VLGI…LKYV, MYVV…DGVI, APKL…MLFL, AFGP…VYNM, WHAV…EALY, WQFV…ALVL, ALYP…QALI, IYVP…VIGF, AYGV…IIYA, VPAP…CAFF, and IIKF…LFTL.

It belongs to the HAK/KUP transporter (TC 2.A.72) family.

The protein resides in the cell inner membrane. It catalyses the reaction K(+)(in) + H(+)(in) = K(+)(out) + H(+)(out). Functionally, transport of potassium into the cell. Likely operates as a K(+):H(+) symporter. In Xanthomonas axonopodis pv. citri (strain 306), this protein is Probable potassium transport system protein Kup.